We begin with the raw amino-acid sequence, 279 residues long: Inorganic pyrophosphatase 2 (279 aa).

D12 functions as the Nucleophile in the catalytic mechanism. 2 residues coordinate Mg(2+): D12 and D14. D14 acts as the Proton donor in catalysis. D23 and D98 together coordinate substrate. D182 lines the Mg(2+) pocket.

It belongs to the HAD-like hydrolase superfamily. Tetramer. Mg(2+) is required as a cofactor.

The enzyme catalyses diphosphate + H2O = 2 phosphate + H(+). Its function is as follows. Catalyzes the specific cleavage of pyrophosphate. The sequence is that of Inorganic pyrophosphatase 2 from Arabidopsis thaliana (Mouse-ear cress).